We begin with the raw amino-acid sequence, 361 residues long: DNA-(apurinic or apyrimidinic site) endonuclease (361 aa).

The tract at residues 1 to 90 (MTSRTKKLKM…TNKTTASVSI (90 aa)) is disordered. Over residues 25–39 (TSEEEKEEVEEEEEE) the composition is skewed to acidic residues. The short motif at 41–44 (KKRK) is the Nuclear localization signal element. The span at 43-64 (RKLVKKTPAKKAPAKKAAAKKK) shows a compositional bias: basic residues. A compositionally biased stretch (acidic residues) spans 68-80 (EDEDEEEKEEEEE). E139 is a binding site for Mg(2+). The active site involves Y211. 3 residues coordinate Mg(2+): D252, N254, and D350. The active-site Proton donor/acceptor is D252.

The protein belongs to the DNA repair enzymes AP/ExoA family. Mg(2+) serves as cofactor. Mn(2+) is required as a cofactor.

The protein localises to the nucleus. In Dictyostelium discoideum (Social amoeba), this protein is DNA-(apurinic or apyrimidinic site) endonuclease (apeA).